Reading from the N-terminus, the 89-residue chain is NADH-ubiquinone oxidoreductase chain 4L (89 aa).

3 consecutive transmembrane segments (helical) span residues 1–21 (MNLS…NRKN), 22–42 (IILM…LILI), and 55–75 (FAIY…GILV).

The protein belongs to the complex I subunit 4L family.

Its subcellular location is the mitochondrion membrane. It carries out the reaction a ubiquinone + NADH + 5 H(+)(in) = a ubiquinol + NAD(+) + 4 H(+)(out). In terms of biological role, core subunit of the mitochondrial membrane respiratory chain NADH dehydrogenase (Complex I) that is believed to belong to the minimal assembly required for catalysis. Complex I functions in the transfer of electrons from NADH to the respiratory chain. The immediate electron acceptor for the enzyme is believed to be ubiquinone. This chain is NADH-ubiquinone oxidoreductase chain 4L (ND4L), found in Trichophyton rubrum (Athlete's foot fungus).